The chain runs to 83 residues: Small ribosomal subunit protein bS16 (83 aa).

Belongs to the bacterial ribosomal protein bS16 family.

The protein is Small ribosomal subunit protein bS16 of Finegoldia magna (strain ATCC 29328 / DSM 20472 / WAL 2508) (Peptostreptococcus magnus).